We begin with the raw amino-acid sequence, 348 residues long: Caricain (348 aa).

The N-terminal stretch at 1–16 (MAMIPSISKLLFVAIC) is a signal peptide. The propeptide at 17 to 132 (LFVHMSVSFG…EEFINEDTVN (116 aa)) is activation peptide. A glycan (N-linked (GlcNAc...) asparagine) is linked at asparagine 86. 3 cysteine pairs are disulfide-bonded: cysteine 154/cysteine 195, cysteine 188/cysteine 227, and cysteine 285/cysteine 336. Cysteine 157 is an active-site residue. Cysteine 157 serves as a coordination point for E64. Residues histidine 291 and asparagine 311 contribute to the active site.

The protein belongs to the peptidase C1 family. Monomer.

The enzyme catalyses Hydrolysis of proteins with broad specificity for peptide bonds, similar to those of papain and chymopapain.. With respect to regulation, repressed by the active-site-directed cysteine protease inhibitor E64 (L-trans-epoxysuccinyl-leucylamide-(4-guanido)-butane) produced by Aspergillus japonicus. Cysteine proteinase with a high level of diversity in substrate specificity. This chain is Caricain, found in Carica papaya (Papaya).